A 252-amino-acid polypeptide reads, in one-letter code: PF03932 family protein CutC (252 aa).

The protein belongs to the CutC family.

It localises to the cytoplasm. The polypeptide is PF03932 family protein CutC (Serratia proteamaculans (strain 568)).